An 83-amino-acid chain; its full sequence is Small ribosomal subunit protein bS20 (83 aa).

This sequence belongs to the bacterial ribosomal protein bS20 family.

Its function is as follows. Binds directly to 16S ribosomal RNA. The polypeptide is Small ribosomal subunit protein bS20 (Lactobacillus delbrueckii subsp. bulgaricus (strain ATCC 11842 / DSM 20081 / BCRC 10696 / JCM 1002 / NBRC 13953 / NCIMB 11778 / NCTC 12712 / WDCM 00102 / Lb 14)).